The sequence spans 320 residues: GDP-L-fucose synthase (320 aa).

14 to 20 (GGSGLVG) provides a ligand contact to NADP(+). The Proton donor/acceptor role is filled by Tyr-142. Residues Lys-146, 169–172 (PTNI), and His-185 contribute to the NADP(+) site. Residues Lys-193, Arg-214, and Asp-276 each contribute to the substrate site.

This sequence belongs to the NAD(P)-dependent epimerase/dehydratase family. Fucose synthase subfamily.

It catalyses the reaction GDP-beta-L-fucose + NADP(+) = GDP-4-dehydro-alpha-D-rhamnose + NADPH + H(+). The protein operates within nucleotide-sugar biosynthesis; GDP-L-fucose biosynthesis via de novo pathway; GDP-L-fucose from GDP-alpha-D-mannose: step 2/2. In terms of biological role, catalyzes the two-step NADP-dependent conversion of GDP-4-dehydro-6-deoxy-D-mannose to GDP-fucose, involving an epimerase and a reductase reaction. This chain is GDP-L-fucose synthase (ger), found in Dictyostelium discoideum (Social amoeba).